We begin with the raw amino-acid sequence, 369 residues long: Glutamate 5-kinase (369 aa).

Lysine 7 is an ATP binding site. Residues serine 48, aspartate 135, and asparagine 147 each coordinate substrate. Residues 167 to 168 (TD) and 208 to 214 (SGGMASK) each bind ATP. Residues 275-353 (AGALHLDEGA…HEIAALLGIE (79 aa)) form the PUA domain.

Belongs to the glutamate 5-kinase family.

The protein resides in the cytoplasm. It carries out the reaction L-glutamate + ATP = L-glutamyl 5-phosphate + ADP. It functions in the pathway amino-acid biosynthesis; L-proline biosynthesis; L-glutamate 5-semialdehyde from L-glutamate: step 1/2. Functionally, catalyzes the transfer of a phosphate group to glutamate to form L-glutamate 5-phosphate. This chain is Glutamate 5-kinase, found in Gloeobacter violaceus (strain ATCC 29082 / PCC 7421).